A 128-amino-acid chain; its full sequence is MFAVIKTGGRQYRVVPDDVLEVGKIEGEVGTIVQLGEVLMLGGDTPQLGLPTIAGASVAAEVLDHKRGPKVISFKKRRRKNSKRKRGYRDEITVLRITEILADGKKPSVGPRPKRVKAEPAPAADAAE.

Residues G104–E128 are disordered. The segment covering E119 to E128 has biased composition (low complexity).

Belongs to the bacterial ribosomal protein bL21 family. In terms of assembly, part of the 50S ribosomal subunit. Contacts protein L20.

Its function is as follows. This protein binds to 23S rRNA in the presence of protein L20. The chain is Large ribosomal subunit protein bL21 from Rhodopseudomonas palustris (strain BisB5).